A 230-amino-acid polypeptide reads, in one-letter code: Sugar fermentation stimulation protein homolog (230 aa).

It belongs to the SfsA family.

This is Sugar fermentation stimulation protein homolog from Clostridium botulinum (strain ATCC 19397 / Type A).